The following is a 416-amino-acid chain: POC1 centriolar protein homolog A (416 aa).

7 WD repeats span residues 16–55, 58–97, 100–139, 142–181, 184–223, 226–265, and 268–307; these read GHRD…RAYR, GHKD…ESVL, AHTG…IICT, EHNN…LIHT, EPGG…LLQH, VHSA…LLYT, and GHQG…VDYS. Residues 311-340 form a disordered region; sequence QQKRDHRTPSAQASGAAGDPESRSGQKTEV. The stretch at 380-412 forms a coiled coil; sequence QLDVLTQTVAILEQRLTLTEDKLKECLEQQHQA.

Belongs to the WD repeat POC1 family.

May play an important role in centriole assembly and/or stability and ciliogenesis. This Danio rerio (Zebrafish) protein is POC1 centriolar protein homolog A.